Reading from the N-terminus, the 222-residue chain is Ribose-5-phosphate isomerase A (222 aa).

Residues 28–31, 81–84, and 94–97 contribute to the substrate site; these read TGST, DGAD, and KGGG. E103 functions as the Proton acceptor in the catalytic mechanism. A substrate-binding site is contributed by K121.

The protein belongs to the ribose 5-phosphate isomerase family. Homodimer.

The catalysed reaction is aldehydo-D-ribose 5-phosphate = D-ribulose 5-phosphate. It functions in the pathway carbohydrate degradation; pentose phosphate pathway; D-ribose 5-phosphate from D-ribulose 5-phosphate (non-oxidative stage): step 1/1. Its function is as follows. Catalyzes the reversible conversion of ribose-5-phosphate to ribulose 5-phosphate. The chain is Ribose-5-phosphate isomerase A from Azoarcus sp. (strain BH72).